Reading from the N-terminus, the 359-residue chain is 4-galactosyl-N-acetylglucosaminide 3-alpha-L-fucosyltransferase 9 (359 aa).

Topologically, residues 1-11 (MTSASKGILRP) are cytoplasmic. The chain crosses the membrane as a helical; Signal-anchor for type II membrane protein span at residues 12 to 32 (FLIVCIILGCFMACLLIYIKP). Over 33–359 (TNSWIFSPME…VGNLEKWFWN (327 aa)) the chain is Lumenal. N-linked (GlcNAc...) asparagine glycosylation is present at Asn-62. The acceptor-binding stretch occupies residues 63 to 168 (ETTILIWVWP…RRDSDIQVPY (106 aa)). A beta-D-galactosyl-(1-&gt;4)-N-acetyl-beta-D-glucosaminyl derivative is bound at residue Gln-75. 3 disulfide bridges follow: Cys-82–Cys-335, Cys-91–Cys-338, and Cys-190–Cys-238. The N-linked (GlcNAc...) asparagine glycan is linked to Asn-101. Position 137 (Glu-137) interacts with a beta-D-galactosyl-(1-&gt;4)-N-acetyl-beta-D-glucosaminyl derivative. The active-site Nucleophile is Glu-137. Glu-137 contributes to the GDP-beta-L-fucose binding site. Residue Asn-153 is glycosylated (N-linked (GlcNAc...) asparagine). Residues Tyr-168, Val-192, Ser-194, Asn-195, Arg-202, Val-226, Tyr-241, Asn-246, Tyr-252, Glu-255, and Lys-256 each coordinate GDP-beta-L-fucose. A donor-binding region spans residues 169 to 326 (GFLTVSTNPF…NWRKDFTVNL (158 aa)). The segment at 327 to 359 (PRFWESHACLACDHVKRHQEYKSVGNLEKWFWN) is acceptor-binding.

It belongs to the glycosyltransferase 10 family. Homodimer. Post-translationally, N-glycosylated with complex-type N-glycans.

Its subcellular location is the golgi apparatus. The protein resides in the trans-Golgi network membrane. It is found in the golgi apparatus membrane. The enzyme catalyses a beta-D-galactosyl-(1-&gt;4)-N-acetyl-beta-D-glucosaminyl derivative + GDP-beta-L-fucose = a beta-D-galactosyl-(1-&gt;4)-[alpha-L-fucosyl-(1-&gt;3)]-N-acetyl-beta-D-glucosaminyl derivative + GDP + H(+). It catalyses the reaction an alpha-Neu5Ac-(2-&gt;3)-beta-D-Gal-(1-&gt;4)-beta-D-GlcNAc-(1-&gt;3)-beta-D-Gal-(1-&gt;4)-beta-D-GlcNAc derivative + GDP-beta-L-fucose = an alpha-Neu5Ac-(2-&gt;3)-beta-D-Gal-(1-&gt;4)-beta-D-GlcNAc-(1-&gt;3)-beta-D-Gal-(1-&gt;4)-[alpha-L-Fuc-(1-&gt;3)]-beta-D-GlcNAc derivative + GDP + H(+). The catalysed reaction is alpha-N-glycoloylneuraminosyl-(2-&gt;3)-beta-D-galactosyl-(1-&gt;4)-N-acetyl-beta-D-glucosaminyl-(1-&gt;3)-beta-D-galactosyl-(1-&gt;4)-N-acetyl-beta-D-glucosaminyl-(1-&gt;3)-beta-D-galactosyl-(1-&gt;4)-beta-D-glucosyl-(1&lt;-&gt;1')-ceramide + GDP-beta-L-fucose = alpha-N-glycoloylneuraminosyl-(2-&gt;3)-beta-D-galactosyl-(1-&gt;4)-N-acetyl-beta-D-glucosaminyl-(1-&gt;3)-beta-D-galactosyl-(1-&gt;4)-[alpha-L-fucosyl-(1-&gt;3)]-N-acetyl-beta-D-glucosaminyl-(1-&gt;3)-beta-D-galactosyl-(1-&gt;4)-beta-D-glucosyl-(1&lt;-&gt;1')-ceramide + GDP + H(+). It carries out the reaction alpha-D-galactosyl-(1-&gt;3)-beta-D-galactosyl-(1-&gt;4)-N-acetyl-beta-D-glucosaminyl-(1-&gt;3)-beta-D-galactosyl-(1-&gt;4)-beta-D-glucosyl-(1&lt;-&gt;1')-ceramide + GDP-beta-L-fucose = a neolactoside IV(3)-alpha-Gal,III(3)-alpha-Fuc-nLc4Cer + GDP + H(+). The enzyme catalyses a neolactoside nLc4Cer + GDP-beta-L-fucose = a neolactoside III(3)-alpha-Fuc-nLc4Cer + GDP + H(+). It catalyses the reaction an N-acetyl-alpha-neuraminyl-(2-&gt;3)-beta-D-galactosyl-(1-&gt;4)-N-acetyl-beta-D-glucosaminyl derivative + GDP-beta-L-fucose = an alpha-Neu5Ac-(2-&gt;3)-beta-D-Gal-(1-&gt;4)-[alpha-L-Fuc-(1-&gt;3)]-beta-D-GlcNAc derivative + GDP + H(+). The catalysed reaction is beta-D-Gal-(1-&gt;4)-beta-D-GlcNAc-(1-&gt;3)-beta-D-Gal-(1-&gt;4)-D-Glc + GDP-beta-L-fucose = beta-D-Gal-(1-&gt;4)-[alpha-L-Fuc-(1-&gt;3)]-beta-D-GlcNAc-(1-&gt;3)-beta-D-Gal-(1-&gt;4)-D-Glc + GDP + H(+). It carries out the reaction an alpha-L-Fuc-(1-&gt;2)-beta-D-Gal-(1-&gt;4)-beta-D-GlcNAc derivative + GDP-beta-L-fucose = an alpha-L-Fuc-(1-&gt;2)-beta-D-Gal-(1-&gt;4)-[alpha-L-Fuc-(1-&gt;3)]-beta-D-GlcNAc derivative + GDP + H(+). It functions in the pathway protein modification; protein glycosylation. Its pathway is glycolipid biosynthesis. Its activity is regulated as follows. Activated by Mn2+. Catalyzes alpha(1-&gt;3) linkage of fucosyl moiety transferred from GDP-beta-L-fucose to N-acetyl glucosamine (GlcNAc) within type 2 lactosamine (LacNAc, beta-D-Gal-(1-&gt;4)-beta-D-GlcNAc-) glycan attached to glycolipids and N- or O-linked glycoproteins. Fucosylates distal type 2 LacNAc and its fucosylated (H-type 2 LacNAc) and sialylated (sialyl-type 2 LacNAc) derivatives to form Lewis x (Lex) (CD15) and Lewis y (Ley) antigenic epitopes involved in cell adhesion and differentiation. Generates Lex epitopes in the brain, presumably playing a role in the maintenance of neuronal stemness and neurite outgrowth in progenitor neural cells. Fucosylates the internal type 2 LacNAc unit of the polylactosamine chain to form VIM-2 antigen that serves as recognition epitope for SELE. Can also modify milk oligosaccharides in particular type 2 tetrasaccharide LNnT. The chain is 4-galactosyl-N-acetylglucosaminide 3-alpha-L-fucosyltransferase 9 from Canis lupus familiaris (Dog).